A 338-amino-acid polypeptide reads, in one-letter code: tRNA N6-adenosine threonylcarbamoyltransferase (338 aa).

His-114 and His-118 together coordinate Fe cation. Residues 136–140, Asp-169, Gly-182, Asp-186, and Asn-275 contribute to the substrate site; that span reads LVSGG. Asp-301 lines the Fe cation pocket.

The protein belongs to the KAE1 / TsaD family. Requires Fe(2+) as cofactor.

It localises to the cytoplasm. The catalysed reaction is L-threonylcarbamoyladenylate + adenosine(37) in tRNA = N(6)-L-threonylcarbamoyladenosine(37) in tRNA + AMP + H(+). Required for the formation of a threonylcarbamoyl group on adenosine at position 37 (t(6)A37) in tRNAs that read codons beginning with adenine. Is involved in the transfer of the threonylcarbamoyl moiety of threonylcarbamoyl-AMP (TC-AMP) to the N6 group of A37, together with TsaE and TsaB. TsaD likely plays a direct catalytic role in this reaction. This chain is tRNA N6-adenosine threonylcarbamoyltransferase, found in Streptococcus equi subsp. zooepidemicus (strain MGCS10565).